Reading from the N-terminus, the 304-residue chain is UDP-N-acetylenolpyruvoylglucosamine reductase (304 aa).

In terms of domain architecture, FAD-binding PCMH-type spans 33 to 198 (RVGGPVDILL…ITATFCFESG (166 aa)). Arg177 is an active-site residue. The active-site Proton donor is the Ser227. Residue Glu297 is part of the active site.

It belongs to the MurB family. The cofactor is FAD.

The protein resides in the cytoplasm. The enzyme catalyses UDP-N-acetyl-alpha-D-muramate + NADP(+) = UDP-N-acetyl-3-O-(1-carboxyvinyl)-alpha-D-glucosamine + NADPH + H(+). It participates in cell wall biogenesis; peptidoglycan biosynthesis. In terms of biological role, cell wall formation. This is UDP-N-acetylenolpyruvoylglucosamine reductase from Clostridium botulinum (strain Eklund 17B / Type B).